Here is an 848-residue protein sequence, read N- to C-terminus: MIDGLRKKFIDFFVKNGHTYLPSASLVPKDDPSLMFVNAGMVPFKEYFVDVRRAPFSSIVTAQKCVRAGGKHNDLENVGFTKRHHTFFEMLGNFSFGCYFKERAIELAWKFVTEELTLSKKKLYITVYHEDDEAFEIWDKLTGFGERKIKRISTSDNFWQMGDIGPCGPCSEIFYDHGEHLSGDIPEDKKDPGERYVEIWNLVFMQYIREQSGELARMECPCIDTGMGLERVAAILEGTDDNYKTKLFEAIVKESQNVTGNKDNQAAHKVIADHLRSASFLIADGVLPGNTGREYVLRRIIRRAVRYSHALGFDTVLLPKLFWVLKEWMGSHYQELTRAENLILDTLTLEEQSFRNTLKSGMKLLEEVSSSMKEGDTLSGDIAFTLYDTHGFPLDITVDILKERKISVDEEGFAERMKMQRLLAQASRMKDMAQTSSYEVKAVFLEHGKTPFIGYENFTGLALILAITEKEGSNKLTIILDQTIFYPESGGQESDQGIIEGENTLLKVEKVYKSTEGVILHECTIIRGQVTSRGEKVNLKIDINRRNSLARNHSATHILHHVLRKRLGAHVSQRGSLVAPSRLRFDFSHSQSITEEELSKIEDCINLMIWDDHPVMTEIKKTDEAIRDGAIGLFGEKYDDTVRVVSIGEAVELCGGTHVKKSSAIGLVKILSASSVAHGVRRIEAVTHLTALQYIREAEQAQLYQLTEHQAKLKAMQKSHQKEITRVYQSIVTNAEARTERYGSVEIITKNVQGISKEILLSLASEIRPKTGVLIVHTELSEALYSLIILDKEIFKNISFIDSMKETIDKSHGKVTPSVPYVIQATFSKKEDLDRCLKNLSELVVSTF.

Positions 553, 557, 654, and 658 each coordinate Zn(2+).

The protein belongs to the class-II aminoacyl-tRNA synthetase family. The cofactor is Zn(2+).

It localises to the cytoplasm. The enzyme catalyses tRNA(Ala) + L-alanine + ATP = L-alanyl-tRNA(Ala) + AMP + diphosphate. Catalyzes the attachment of alanine to tRNA(Ala) in a two-step reaction: alanine is first activated by ATP to form Ala-AMP and then transferred to the acceptor end of tRNA(Ala). Also edits incorrectly charged Ser-tRNA(Ala) and Gly-tRNA(Ala) via its editing domain. This chain is Alanine--tRNA ligase, found in Neorickettsia sennetsu (strain ATCC VR-367 / Miyayama) (Ehrlichia sennetsu).